A 155-amino-acid chain; its full sequence is MFGMGFFEILVVLVVAIIFLGPEKFPQAVVDVVKFFRAVKKTLNDAKDTLDKEINIEEIKKETLEYQKLFEDKIEGLKGVRIEELEDAKIVAEKEIKSVQDLMQDYKQSLENNAPPKHLNKEVSNREVFHNEPPKEIELIANNNTTKHDKEKEHV.

Residues 1-21 form a helical membrane-spanning segment; the sequence is MFGMGFFEILVVLVVAIIFLG. Positions 109-155 are disordered; sequence SLENNAPPKHLNKEVSNREVFHNEPPKEIELIANNNTTKHDKEKEHV. Composition is skewed to basic and acidic residues over residues 119–138 and 146–155; these read LNKE…KEIE and TKHDKEKEHV.

Belongs to the TatB family. As to quaternary structure, the Tat system comprises two distinct complexes: a TatABC complex, containing multiple copies of TatA, TatB and TatC subunits, and a separate TatA complex, containing only TatA subunits. Substrates initially bind to the TatABC complex, which probably triggers association of the separate TatA complex to form the active translocon.

It localises to the cell inner membrane. Functionally, part of the twin-arginine translocation (Tat) system that transports large folded proteins containing a characteristic twin-arginine motif in their signal peptide across membranes. Together with TatC, TatB is part of a receptor directly interacting with Tat signal peptides. TatB may form an oligomeric binding site that transiently accommodates folded Tat precursor proteins before their translocation. This is Sec-independent protein translocase protein TatB from Helicobacter acinonychis (strain Sheeba).